Consider the following 266-residue polypeptide: Norfluorocurarine synthase 2 (266 aa).

The 111-residue stretch at histidine 11 to isoleucine 121 folds into the AB hydrolase-1 domain. Residues serine 86, aspartate 216, and histidine 244 contribute to the active site.

The protein belongs to the AB hydrolase superfamily. As to quaternary structure, homodimer. Mainly expressed in roots.

The enzyme catalyses 17-dehydropreakuammicine + H2O = norfluorocurarine + methanol + CO2. It functions in the pathway alkaloid biosynthesis. Functionally, hydrolase involved in the biosynthesis of curare monoterpene indole alkaloids (MIAs), natural products such as strychnine, a neurotoxic compound used as a pesticide to control rodents, and its pharmacologically active derivatives, including brucine, used to regulate blood pressure. Curare alkaloids act as animal glycine receptor antagonists. Catalyzes the conversion of dehydropreakuammicine to norfluorocurarine. This is Norfluorocurarine synthase 2 from Strychnos nux-vomica (Poison nut).